An 891-amino-acid polypeptide reads, in one-letter code: Alanine--tRNA ligase (891 aa).

Residues H576, H580, C684, and H688 each coordinate Zn(2+).

The protein belongs to the class-II aminoacyl-tRNA synthetase family. Zn(2+) is required as a cofactor.

It localises to the cytoplasm. The catalysed reaction is tRNA(Ala) + L-alanine + ATP = L-alanyl-tRNA(Ala) + AMP + diphosphate. Functionally, catalyzes the attachment of alanine to tRNA(Ala) in a two-step reaction: alanine is first activated by ATP to form Ala-AMP and then transferred to the acceptor end of tRNA(Ala). Also edits incorrectly charged Ser-tRNA(Ala) and Gly-tRNA(Ala) via its editing domain. In Orientia tsutsugamushi (strain Boryong) (Rickettsia tsutsugamushi), this protein is Alanine--tRNA ligase.